The primary structure comprises 89 residues: Small ribosomal subunit protein uS17 (89 aa).

The protein belongs to the universal ribosomal protein uS17 family. As to quaternary structure, part of the 30S ribosomal subunit.

Its function is as follows. One of the primary rRNA binding proteins, it binds specifically to the 5'-end of 16S ribosomal RNA. This chain is Small ribosomal subunit protein uS17, found in Verminephrobacter eiseniae (strain EF01-2).